We begin with the raw amino-acid sequence, 188 residues long: Large ribosomal subunit protein eL18 (188 aa).

Residues Glu-147–Lys-188 form a disordered region. 2 stretches are compositionally biased toward basic residues: residues Ser-161–Gly-171 and Arg-178–Lys-188.

It belongs to the eukaryotic ribosomal protein eL18 family.

It is found in the cytoplasm. The polypeptide is Large ribosomal subunit protein eL18 (RpL18) (Diaphorina citri (Asian citrus psyllid)).